A 531-amino-acid polypeptide reads, in one-letter code: Probable cytochrome P450 4e1 (531 aa).

Residues Glu-307 and Cys-444 each coordinate heme.

The protein belongs to the cytochrome P450 family. Heme serves as cofactor.

It localises to the endoplasmic reticulum membrane. The protein resides in the microsome membrane. In terms of biological role, may be involved in the metabolism of insect hormones and in the breakdown of synthetic insecticides. This chain is Probable cytochrome P450 4e1 (Cyp4e1), found in Drosophila melanogaster (Fruit fly).